Here is a 207-residue protein sequence, read N- to C-terminus: Large ribosomal subunit protein uL4 (207 aa).

Residues 44-76 (KRRGTASAKTRSEVRGGGRKPWRQKGTGRARHG) are disordered. A compositionally biased stretch (basic residues) spans 60-76 (GGRKPWRQKGTGRARHG).

This sequence belongs to the universal ribosomal protein uL4 family. In terms of assembly, part of the 50S ribosomal subunit.

In terms of biological role, one of the primary rRNA binding proteins, this protein initially binds near the 5'-end of the 23S rRNA. It is important during the early stages of 50S assembly. It makes multiple contacts with different domains of the 23S rRNA in the assembled 50S subunit and ribosome. Its function is as follows. Forms part of the polypeptide exit tunnel. In Natranaerobius thermophilus (strain ATCC BAA-1301 / DSM 18059 / JW/NM-WN-LF), this protein is Large ribosomal subunit protein uL4.